The chain runs to 176 residues: Tumor necrosis factor receptor superfamily member 23 (176 aa).

Positions 1–29 (MVTFSHVSSLSHWFLLLLLLNLFLPVIFA) are cleaved as a signal peptide. TNFR-Cys repeat units lie at residues 37–72 (NCPD…QGQC), 74–114 (KCHP…DRKC), and 115–155 (ECQI…NTVC). Cystine bridges form between Cys-38–Cys-49, Cys-50–Cys-63, Cys-53–Cys-72, Cys-75–Cys-90, Cys-93–Cys-106, Cys-96–Cys-114, Cys-116–Cys-131, Cys-134–Cys-147, and Cys-137–Cys-155. Residue Asn-148 is glycosylated (N-linked (GlcNAc...) asparagine). Cys-155 is lipidated: GPI-anchor amidated cysteine. The propeptide at 156–176 (SSSVSNPRNWLFLLMLIVFCI) is removed in mature form.

As to expression, ubiquitous.

It is found in the cell membrane. Receptor for the cytotoxic ligand TRAIL. Lacks a cytoplasmic death domain and hence is not capable of inducing apoptosis. May protect cells against TRAIL mediated apoptosis through ligand competition. Cannot induce the NF-kappa-B pathway. The sequence is that of Tumor necrosis factor receptor superfamily member 23 (Tnfrsf23) from Mus musculus (Mouse).